We begin with the raw amino-acid sequence, 109 residues long: T cell receptor alpha variable 25 (109 aa).

The N-terminal stretch at 1 to 19 (MLLITSMLVLWMQLSQVNG) is a signal peptide. The 90-residue stretch at 20-109 (QQVMQIPQYQ…TDVGTYFCAG (90 aa)) folds into the Ig-like domain. A disulfide bridge links Cys-41 with Cys-107. 2 N-linked (GlcNAc...) asparagine glycosylation sites follow: Asn-42 and Asn-89.

As to quaternary structure, alpha-beta TR is a heterodimer composed of an alpha and beta chain; disulfide-linked. The alpha-beta TR is associated with the transmembrane signaling CD3 coreceptor proteins to form the TR-CD3 (TcR or TCR). The assembly of alpha-beta TR heterodimers with CD3 occurs in the endoplasmic reticulum where a single alpha-beta TR heterodimer associates with one CD3D-CD3E heterodimer, one CD3G-CD3E heterodimer and one CD247 homodimer forming a stable octameric structure. CD3D-CD3E and CD3G-CD3E heterodimers preferentially associate with TR alpha and TR beta chains, respectively. The association of the CD247 homodimer is the last step of TcR assembly in the endoplasmic reticulum and is required for transport to the cell surface.

The protein localises to the cell membrane. Functionally, v region of the variable domain of T cell receptor (TR) alpha chain that participates in the antigen recognition. Alpha-beta T cell receptors are antigen specific receptors which are essential to the immune response and are present on the cell surface of T lymphocytes. Recognize peptide-major histocompatibility (MH) (pMH) complexes that are displayed by antigen presenting cells (APC), a prerequisite for efficient T cell adaptive immunity against pathogens. Binding of alpha-beta TR to pMH complex initiates TR-CD3 clustering on the cell surface and intracellular activation of LCK that phosphorylates the ITAM motifs of CD3G, CD3D, CD3E and CD247 enabling the recruitment of ZAP70. In turn ZAP70 phosphorylates LAT, which recruits numerous signaling molecules to form the LAT signalosome. The LAT signalosome propagates signal branching to three major signaling pathways, the calcium, the mitogen-activated protein kinase (MAPK) kinase and the nuclear factor NF-kappa-B (NF-kB) pathways, leading to the mobilization of transcription factors that are critical for gene expression and essential for T cell growth and differentiation. The T cell repertoire is generated in the thymus, by V-(D)-J rearrangement. This repertoire is then shaped by intrathymic selection events to generate a peripheral T cell pool of self-MH restricted, non-autoaggressive T cells. Post-thymic interaction of alpha-beta TR with the pMH complexes shapes TR structural and functional avidity. This chain is T cell receptor alpha variable 25, found in Homo sapiens (Human).